The primary structure comprises 423 residues: Replication factor C large subunit (423 aa).

63–70 (GPPGIGKT) is a binding site for ATP.

This sequence belongs to the activator 1 small subunits family. RfcL subfamily. Heteromultimer composed of small subunits (RfcS) and large subunits (RfcL).

Its function is as follows. Part of the RFC clamp loader complex which loads the PCNA sliding clamp onto DNA. The chain is Replication factor C large subunit from Pyrobaculum islandicum (strain DSM 4184 / JCM 9189 / GEO3).